A 1499-amino-acid polypeptide reads, in one-letter code: Rap guanine nucleotide exchange factor 2 (1499 aa).

Disordered regions lie at residues H40–L59 and S68–L101. Positions V83–I94 are enriched in acidic residues. A135–V254 serves as a coordination point for a nucleoside 3',5'-cyclic phosphate. The N-terminal Ras-GEF domain occupies K267–K380. In terms of domain architecture, PDZ spans L385–F470. S501 carries the phosphoserine modification. Residues P606–E692 enclose the Ras-associating domain. Phosphothreonine; by PLK2 is present on T644. The 228-residue stretch at S717–L944 folds into the Ras-GEF domain. S806 is subject to Phosphoserine; by PLK2. A Phosphoserine modification is found at S930. The residue at position 933 (S933) is a Phosphoserine; by PLK2. The tract at residues P1002 to I1050 is disordered. At S1022 the chain carries Phosphoserine. The span at Q1031–P1040 shows a compositional bias: low complexity. Residues S1080, S1089, S1095, S1116, S1120, and S1159 each carry the phosphoserine modification. Positions S1095 to F1160 are disordered. Low complexity-rich tracts occupy residues S1111–P1125 and S1141–F1160. The residue at position 1176 (S1176) is a Phosphoserine; by PLK2. Disordered regions lie at residues P1224 to S1256 and T1305 to V1499. 2 stretches are compositionally biased toward polar residues: residues G1247–S1256 and Y1307–G1331. A compositionally biased stretch (low complexity) spans E1355–T1366. The segment covering S1441–P1462 has biased composition (polar residues). Over residues T1488 to V1499 the composition is skewed to acidic residues.

The protein belongs to the RAPGEF2 family. Interacts with CDH1, CTNNB1 and TJP1. Interacts (via C-terminal domain) with MAGI2 (via PDZ and WW domains); the interaction occurs before or after NGF stimulation. Interacts with KIDINS220 and NTRK1; the interactions occur after NGF stimulation. Found in a complex, at least composed of KIDINS220, MAGI2, NTRK1 and RAPGEF2; the complex is mainly formed at late endosomes in a neuronal growth factor (NGF)-dependent manner. Interacts (via C-terminal domain) with NEDD4 (via WW domains); this interaction leads to ubiquitination and degradation via the proteasome pathway in a cAMP-independent manner. Interacts with MAGI1 isoform 3 (via PDZ domain). Interacts with ADRB1 (via C-terminal PDZ motif); the interaction is direct. Interacts (via Ras-associating domain) with RAP1A (via GTP-bound active form). Interacts weakly with HRAS (via GDP- and GTP-bound forms). Interacts (via C-terminal domain) with MAGI2 (via PDZ and WW domains). In terms of processing, ubiquitinated by NEDD4, leading to proteasomal degradation. Phosphorylation by PLK2 promotes its activity. As to expression, expressed in primary neuronal and endocrine cells (at protein level). Highest expression levels in brain. Lower expression levels in heart, kidney, lung, placenta and blood leukocytes.

Its subcellular location is the cytoplasm. It is found in the perinuclear region. It localises to the cell membrane. The protein resides in the late endosome. The protein localises to the cell junction. Its function is as follows. Functions as a guanine nucleotide exchange factor (GEF), which activates Rap and Ras family of small GTPases by exchanging bound GDP for free GTP in a cAMP-dependent manner. Serves as a link between cell surface receptors and Rap/Ras GTPases in intracellular signaling cascades. Also acts as an effector for Rap1 by direct association with Rap1-GTP thereby leading to the amplification of Rap1-mediated signaling. Shows weak activity on HRAS. It is controversial whether RAPGEF2 binds cAMP and cGMP or not. Its binding to ligand-activated beta-1 adrenergic receptor ADRB1 leads to the Ras activation through the G(s)-alpha signaling pathway. Involved in the cAMP-induced Ras and Erk1/2 signaling pathway that leads to sustained inhibition of long term melanogenesis by reducing dendrite extension and melanin synthesis. Also provides inhibitory signals for cell proliferation of melanoma cells and promotes their apoptosis in a cAMP-independent nanner. Regulates cAMP-induced neuritogenesis by mediating the Rap1/B-Raf/ERK signaling through a pathway that is independent on both PKA and RAPGEF3/RAPGEF4. Involved in neuron migration and in the formation of the major forebrain fiber connections forming the corpus callosum, the anterior commissure and the hippocampal commissure during brain development. Involved in neuronal growth factor (NGF)-induced sustained activation of Rap1 at late endosomes and in brain-derived neurotrophic factor (BDNF)-induced axon outgrowth of hippocampal neurons. Plays a role in the regulation of embryonic blood vessel formation and in the establishment of basal junction integrity and endothelial barrier function. May be involved in the regulation of the vascular endothelial growth factor receptor KDR and cadherin CDH5 expression at allantois endothelial cell-cell junctions. The polypeptide is Rap guanine nucleotide exchange factor 2 (RAPGEF2) (Homo sapiens (Human)).